Here is a 158-residue protein sequence, read N- to C-terminus: Biotin carboxyl carrier protein of acetyl-CoA carboxylase (158 aa).

One can recognise a Biotinyl-binding domain in the interval 81-157 (YATIVSPMVG…DCGQALMKVE (77 aa)). An N6-biotinyllysine modification is found at Lys-123.

It is found in the plastid. The protein localises to the chloroplast. Its pathway is lipid metabolism; fatty acid biosynthesis. Functionally, this protein is a component of the acetyl coenzyme A carboxylase complex; first, biotin carboxylase catalyzes the carboxylation of the carrier protein and then the transcarboxylase transfers the carboxyl group to form malonyl-CoA. This chain is Biotin carboxyl carrier protein of acetyl-CoA carboxylase (accB), found in Pyropia yezoensis (Susabi-nori).